The following is a 431-amino-acid chain: Hydroxylamine reductase (431 aa).

Positions 5, 8, 17, and 23 each coordinate [4Fe-4S] cluster. H131, E155, C199, C286, C314, C339, E373, and K375 together coordinate hybrid [4Fe-2O-2S] cluster. Position 286 is a cysteine persulfide (C286).

The protein belongs to the HCP family. The cofactor is [4Fe-4S] cluster. Requires hybrid [4Fe-2O-2S] cluster as cofactor.

It localises to the cytoplasm. The enzyme catalyses A + NH4(+) + H2O = hydroxylamine + AH2 + H(+). Functionally, catalyzes the reduction of hydroxylamine to form NH(3) and H(2)O. The polypeptide is Hydroxylamine reductase (Thermotoga maritima (strain ATCC 43589 / DSM 3109 / JCM 10099 / NBRC 100826 / MSB8)).